We begin with the raw amino-acid sequence, 269 residues long: MTIDRYRRFARLAFIATLPLAGLATAAAAQEGANGKSFKDDFDTLDTRVWFVSDGWNNGGHQNCTWSKKQVKTVDGILELTFEEKKVKERNFACGEIQTRKRFGYGTYEARIKAADGSGLNSAFFTYIGPADKKPHDEIDFEVLGKNTAKVQINQYVSAKGGNEFLADVPGGANQGFNDYAFVWEKNRIRYYVNGELVHEVTDPAKIPVNAQKIFFSLWGTDTLTDWMGTFSYKEPTKLQVDRVAFTAAGDECQFAESVACQLERAQSE.

The first 29 residues, 1–29 (MTIDRYRRFARLAFIATLPLAGLATAAAA), serve as a signal peptide directing secretion. One can recognise a GH16 domain in the interval 40 to 252 (DDFDTLDTRV…RVAFTAAGDE (213 aa)). E138 functions as the Nucleophile in the catalytic mechanism. The Proton donor role is filled by E142.

Belongs to the glycosyl hydrolase 16 family.

It localises to the secreted. The protein operates within glycan metabolism; exopolysaccharide biosynthesis. Functionally, cleaves high molecular weight succinoglycan to yield LMW succinoglycan. Dynamically regulates the molecular weight distribution of succinoglycan by cleaving nascent succinoglycan only during a limited period after its synthesis, perhaps before it undergoes a time-dependent change in its conformation or aggregation state. The sequence is that of Endo-1,3-1,4-beta-glycanase ExoK (exoK) from Rhizobium meliloti (strain 1021) (Ensifer meliloti).